The sequence spans 258 residues: Probable phthiotriol/phenolphthiotriol dimycocerosates methyltransferase 2 (258 aa).

The protein belongs to the methyltransferase superfamily. Phthiotriol/phenolphthiotriol dimycocerosates methyltransferase family.

Catalyzes the methylation of the lipid moiety of the intermediate compounds phthiotriol and glycosylated phenolphthiotriol dimycoserosates to form phthiocerol dimycocerosates (DIM A) and glycosylated phenolphthiocerol dimycocerosates (PGL). This is Probable phthiotriol/phenolphthiotriol dimycocerosates methyltransferase 2 from Mycobacterium ulcerans (strain Agy99).